A 259-amino-acid polypeptide reads, in one-letter code: Acyl-[acyl-carrier-protein]--UDP-N-acetylglucosamine O-acyltransferase (259 aa).

Belongs to the transferase hexapeptide repeat family. LpxA subfamily. In terms of assembly, homotrimer.

It localises to the cytoplasm. It catalyses the reaction a (3R)-hydroxyacyl-[ACP] + UDP-N-acetyl-alpha-D-glucosamine = a UDP-3-O-[(3R)-3-hydroxyacyl]-N-acetyl-alpha-D-glucosamine + holo-[ACP]. Its pathway is glycolipid biosynthesis; lipid IV(A) biosynthesis; lipid IV(A) from (3R)-3-hydroxytetradecanoyl-[acyl-carrier-protein] and UDP-N-acetyl-alpha-D-glucosamine: step 1/6. Its function is as follows. Involved in the biosynthesis of lipid A, a phosphorylated glycolipid that anchors the lipopolysaccharide to the outer membrane of the cell. This is Acyl-[acyl-carrier-protein]--UDP-N-acetylglucosamine O-acyltransferase from Psychrobacter sp. (strain PRwf-1).